The following is a 22-amino-acid chain: Heliocin (22 aa).

The residue at position 1 (Q1) is a Pyrrolidone carboxylic acid. A disordered region spans residues Q1–A22. T7 carries O-linked (GalNAc...) threonine glycosylation.

Monomer. In terms of tissue distribution, hemolymph.

The protein localises to the secreted. Functionally, has antibacterial activity, preferentially against Gram-negative bacteria. The protein is Heliocin of Heliothis virescens (Tobacco budworm moth).